We begin with the raw amino-acid sequence, 338 residues long: Glyceraldehyde-3-phosphate dehydrogenase (338 aa).

NAD(+) contacts are provided by residues 12 to 13 (RI), Asp-34, and Arg-79. D-glyceraldehyde 3-phosphate-binding positions include 150–152 (SCT), Thr-181, 210–211 (TG), and Arg-233. The active-site Nucleophile is the Cys-151. Residue Asn-316 coordinates NAD(+).

This sequence belongs to the glyceraldehyde-3-phosphate dehydrogenase family. As to quaternary structure, homotetramer.

The protein localises to the cytoplasm. The catalysed reaction is D-glyceraldehyde 3-phosphate + phosphate + NAD(+) = (2R)-3-phospho-glyceroyl phosphate + NADH + H(+). It functions in the pathway carbohydrate degradation; glycolysis; pyruvate from D-glyceraldehyde 3-phosphate: step 1/5. This Phaffia rhodozyma (Yeast) protein is Glyceraldehyde-3-phosphate dehydrogenase (GPD).